Reading from the N-terminus, the 1108-residue chain is Eukaryotic translation initiation factor 2-alpha kinase 3 (1108 aa).

The signal sequence occupies residues 1–27; sequence MERATQPRPRALLLLFLLLGCAAGISA. The Lumenal segment spans residues 28–506; that stretch reads VARARSLLAP…HYSKNIRKKD (479 aa). Residues 71-92 are disordered; that stretch reads EALPAASGEQESRATESDDDVE. Asn-253 carries an N-linked (GlcNAc...) asparagine glycan. A helical transmembrane segment spans residues 507-527; that stretch reads PILLLHWWKEIFGTILLCIVA. At 528–1108 the chain is on the cytoplasmic side; the sequence is TTFIVRRLFH…SSTFSPLPGN (581 aa). The tract at residues 542–563 is disordered; that stretch reads RQRKESETQCQTESKYDSVSAD. In terms of domain architecture, Protein kinase spans 585–1069; the sequence is FEPIQCMGRG…ATDIIENAVF (485 aa). Residue 591–599 coordinates ATP; the sequence is MGRGGFGVV. Tyr-611 carries the post-translational modification Phosphotyrosine; by autocatalysis. Lys-614 serves as a coordination point for ATP. An insert loop region spans residues 639–880; it reads EHPGIVRYFN…SPKVYLYIQM (242 aa). Ser-707 is modified (phosphoserine). Disordered stretches follow at residues 772-818 and 832-856; these read DEGH…RMNR and FKHS…TTLS. A compositionally biased stretch (polar residues) spans 785–798; the sequence is SPYTRSREGTSSSI. Thr-794 is modified (phosphothreonine). Low complexity predominate over residues 837–856; that stretch reads SRSSSEATLSTSPTRPTTLS. The Proton acceptor role is filled by Asp-929. Thr-974 carries the phosphothreonine modification. A disordered region spans residues 1080–1108; that stretch reads LRQRSRSLSSSGTKHSRQPSSTFSPLPGN. A Phosphoserine modification is found at Ser-1086. Positions 1097–1108 are enriched in polar residues; it reads QPSSTFSPLPGN.

This sequence belongs to the protein kinase superfamily. Ser/Thr protein kinase family. GCN2 subfamily. Forms dimers with HSPA5/BIP in resting cells. Homotetramerizes in response to endoplasmic reticulum (ER) stress, leading to its activation. Interacts with HSP90B1/GRP94. Interacts with DNAJC3; inhibiting EIF2AK3/PERK activity. Interacts with ATAD3A; ATAD3A and EIF2S1/eIF-2-alpha occupy a common binding site within the cytoplasmic loop of EIF2AK3/PERK, leading to prevent EIF2AK3/PERK association with its substrate EIF2S1/eIF-2-alpha. Interacts with MFN2. Interacts with TMEM33. Interacts with PDIA6. Interacts with LACC1. Post-translationally, oligomerization of the N-terminal ER luminal domain by ER stress promotes EIF2AK3/PERK trans-autophosphorylation of the C-terminal cytoplasmic kinase domain at multiple residues including Thr-974 on the kinase activation loop. Autophosphorylated at Tyr-611 following endoplasmic reticulum stress, leading to activate its activity. Dephosphorylated at Tyr-611 by PTPN1/PTP1B, leading to inactivate its enzyme activity. Phosphorylation at Thr-794 by AKT (AKT1, AKT2 and/or AKT3) inactivates EIF2AK3/PERK. In terms of processing, ADP-ribosylated by PARP16 upon ER stress, which increases kinase activity. In terms of tissue distribution, ubiquitous.

The protein localises to the endoplasmic reticulum membrane. It catalyses the reaction L-seryl-[protein] + ATP = O-phospho-L-seryl-[protein] + ADP + H(+). It carries out the reaction L-threonyl-[protein] + ATP = O-phospho-L-threonyl-[protein] + ADP + H(+). The enzyme catalyses L-tyrosyl-[protein] + ATP = O-phospho-L-tyrosyl-[protein] + ADP + H(+). Inhibited by HSPA5/BIP in absence of stress. Perturbation in protein folding in the endoplasmic reticulum (ER) promotes reversible dissociation from HSPA5/BIP and oligomerization, resulting in trans-autophosphorylation and kinase activity induction. Inactivated following phosphorylation at Thr-794 by AKT (AKT1, AKT2 and/or AKT3). Inhibited by ATAD3A at mitochondria-endoplasmic reticulum contact sites, providing a safe haven for mitochondrial protein translation during ER stress. Functionally, metabolic-stress sensing protein kinase that phosphorylates the alpha subunit of eukaryotic translation initiation factor 2 (EIF2S1/eIF-2-alpha) in response to various stress, such as unfolded protein response (UPR). Key effector of the integrated stress response (ISR) to unfolded proteins: EIF2AK3/PERK specifically recognizes and binds misfolded proteins, leading to its activation and EIF2S1/eIF-2-alpha phosphorylation. EIF2S1/eIF-2-alpha phosphorylation in response to stress converts EIF2S1/eIF-2-alpha in a global protein synthesis inhibitor, leading to a global attenuation of cap-dependent translation, while concomitantly initiating the preferential translation of ISR-specific mRNAs, such as the transcriptional activators ATF4 and QRICH1, and hence allowing ATF4- and QRICH1-mediated reprogramming. The EIF2AK3/PERK-mediated unfolded protein response increases mitochondrial oxidative phosphorylation by promoting ATF4-mediated expression of COX7A2L/SCAF1, thereby increasing formation of respiratory chain supercomplexes. In contrast to most subcellular compartments, mitochondria are protected from the EIF2AK3/PERK-mediated unfolded protein response due to EIF2AK3/PERK inhibition by ATAD3A at mitochondria-endoplasmic reticulum contact sites. In addition to EIF2S1/eIF-2-alpha, also phosphorylates NFE2L2/NRF2 in response to stress, promoting release of NFE2L2/NRF2 from the BCR(KEAP1) complex, leading to nuclear accumulation and activation of NFE2L2/NRF2. Serves as a critical effector of unfolded protein response (UPR)-induced G1 growth arrest due to the loss of cyclin-D1 (CCND1). Involved in control of mitochondrial morphology and function. This Rattus norvegicus (Rat) protein is Eukaryotic translation initiation factor 2-alpha kinase 3 (Eif2ak3).